The chain runs to 746 residues: Disintegrin and metalloproteinase domain-containing protein 18 (746 aa).

Positions 1–16 (MFFLLALLTELGRLQA) are cleaved as a signal peptide. The propeptide occupies 17–183 (HVGSEGIFLH…QKKNLSKLLP (167 aa)). Residues asparagine 36, asparagine 122, asparagine 149, asparagine 156, asparagine 177, and asparagine 294 are each glycosylated (N-linked (GlcNAc...) asparagine). Residues 177-687 (NLSKLLPQYL…EKGYNAHWNN (511 aa)) lie on the Extracellular side of the membrane. A Peptidase M12B domain is found at 184 to 381 (QYLEIYIIVE…FEAKCLQKLS (198 aa)). 4 disulfide bridges follow: cysteine 293–cysteine 376, cysteine 335–cysteine 360, cysteine 337–cysteine 342, and cysteine 450–cysteine 471. Asparagine 359, asparagine 465, asparagine 611, and asparagine 625 each carry an N-linked (GlcNAc...) asparagine glycan. A Disintegrin domain is found at 390–479 (QPVCGNGILE…DCVPDTYALN (90 aa)). The EGF-like domain occupies 620 to 654 (TGYNCNTTTKCKGKGICNNFGNCQCFPGHKPPDCK). 3 disulfide bridges follow: cysteine 624-cysteine 636, cysteine 630-cysteine 642, and cysteine 644-cysteine 653. A helical membrane pass occupies residues 688 to 708 (WFILSFYIVLPFFIIFTIVIF). Over 709–746 (KRNEIRKLCNRENTELIHPLYQKAMMWNINIAQNFRSK) the chain is Cytoplasmic.

The prodomain and the metalloprotease-like domain are cleaved during the epididymal maturation of the spermatozoa. As to expression, expressed predominantly in adult and prepubertal testis.

It is found in the membrane. Sperm surface membrane protein that may be involved in spermatogenesis and fertilization. This is a non catalytic metalloprotease-like protein. The polypeptide is Disintegrin and metalloproteinase domain-containing protein 18 (ADAM18) (Macaca fascicularis (Crab-eating macaque)).